The primary structure comprises 159 residues: Ribosomal RNA large subunit methyltransferase H (159 aa).

Residues Leu-76, Gly-108, and 127 to 132 contribute to the S-adenosyl-L-methionine site; that span reads FSKMTF.

It belongs to the RNA methyltransferase RlmH family. As to quaternary structure, homodimer.

The protein resides in the cytoplasm. The catalysed reaction is pseudouridine(1915) in 23S rRNA + S-adenosyl-L-methionine = N(3)-methylpseudouridine(1915) in 23S rRNA + S-adenosyl-L-homocysteine + H(+). Functionally, specifically methylates the pseudouridine at position 1915 (m3Psi1915) in 23S rRNA. In Clostridium botulinum (strain Kyoto / Type A2), this protein is Ribosomal RNA large subunit methyltransferase H.